Here is a 213-residue protein sequence, read N- to C-terminus: Protein-L-isoaspartate O-methyltransferase (213 aa).

Ser-61 is a catalytic residue.

It belongs to the methyltransferase superfamily. L-isoaspartyl/D-aspartyl protein methyltransferase family.

Its subcellular location is the cytoplasm. It catalyses the reaction [protein]-L-isoaspartate + S-adenosyl-L-methionine = [protein]-L-isoaspartate alpha-methyl ester + S-adenosyl-L-homocysteine. Its function is as follows. Catalyzes the methyl esterification of L-isoaspartyl residues in peptides and proteins that result from spontaneous decomposition of normal L-aspartyl and L-asparaginyl residues. It plays a role in the repair and/or degradation of damaged proteins. The sequence is that of Protein-L-isoaspartate O-methyltransferase from Petrotoga mobilis (strain DSM 10674 / SJ95).